A 147-amino-acid polypeptide reads, in one-letter code: Endoribonuclease YbeY (147 aa).

3 residues coordinate Zn(2+): His107, His111, and His117.

The protein belongs to the endoribonuclease YbeY family. Zn(2+) serves as cofactor.

The protein localises to the cytoplasm. In terms of biological role, single strand-specific metallo-endoribonuclease involved in late-stage 70S ribosome quality control and in maturation of the 3' terminus of the 16S rRNA. This chain is Endoribonuclease YbeY, found in Solibacter usitatus (strain Ellin6076).